A 469-amino-acid chain; its full sequence is Uronate isomerase (469 aa).

Belongs to the metallo-dependent hydrolases superfamily. Uronate isomerase family.

It catalyses the reaction D-glucuronate = D-fructuronate. The catalysed reaction is aldehydo-D-galacturonate = keto-D-tagaturonate. It participates in carbohydrate metabolism; pentose and glucuronate interconversion. This Pectobacterium carotovorum subsp. carotovorum (strain PC1) protein is Uronate isomerase.